A 276-amino-acid chain; its full sequence is MNSKRMLLLVLFAFSLMLVERYFRNHQVEELRLSDWFHPRKRPDVITKTDWLAPVLWEGTFDRRVLEKHYRRRNITVGLAVFATGRFAEEYLRPFLHSANKHFMTGYRVIFYIMVDAFFKLPDIEPSPLRTFKAFKVGTERWWLDGPLVHVKSLGEHIASHIQDEVDFLFSMAANQVFQNEFGVETLGPLVAQLHAWWYFRNTKNFPYERRPTSAACIPFGQGDFYYGNLMVGGTPHNILDFIKEYLNGVIHDIKNGLNSTYEKHLNKYFYLNKPT.

Residues 1–6 (MNSKRM) are Cytoplasmic-facing. A helical; Signal-anchor for type II membrane protein transmembrane segment spans residues 7-23 (LLLVLFAFSLMLVERYF). Over 24–276 (RNHQVEELRL…NKYFYLNKPT (253 aa)) the chain is Lumenal. N74 carries an N-linked (GlcNAc...) asparagine glycan. Residues 82 to 87 (FATGRF), 173 to 175 (AAN), and 195 to 198 (HAWW) each bind substrate. The active-site Nucleophile is the E263.

Belongs to the glycosyltransferase 6 family. Mn(2+) serves as cofactor. In terms of tissue distribution, expressed in both healthy and inflamed gingival tissue samples at similar levels, with higher expression in the gingival connective tissue compared to gingival epithelium. Strongest expression in testis, followed by leukocytes.

The protein resides in the membrane. The protein is Putative glycosyltransferase 6 domain-containing protein 1 (GLT6D1) of Homo sapiens (Human).